A 245-amino-acid polypeptide reads, in one-letter code: MSQPKTPLRRNGFTFKQFFVAHDRCAMKVGTDGILLGAWAPVAKAQRVLDIGAGSGLLTLMLAQRTEDTVTLDAVELDAQAAEQARENIDASPWAARIQVHSADIQTWTQQQTQRYELIVSNPPYYDKGVACATPAREQARYTTTLDHGTLLACAAQLITEEGFFCVVLPESSGEAFSRLAGEQGWHLRLRTDVAENAGKLPHRVLLAFSPSPGECFCDDLLIRGPDQHYSPAYCALTEAFYLFM.

It belongs to the methyltransferase superfamily. tRNA (adenine-N(6)-)-methyltransferase family.

It is found in the cytoplasm. The enzyme catalyses adenosine(37) in tRNA1(Val) + S-adenosyl-L-methionine = N(6)-methyladenosine(37) in tRNA1(Val) + S-adenosyl-L-homocysteine + H(+). Specifically methylates the adenine in position 37 of tRNA(1)(Val) (anticodon cmo5UAC). This chain is tRNA1(Val) (adenine(37)-N6)-methyltransferase, found in Cronobacter sakazakii (strain ATCC BAA-894) (Enterobacter sakazakii).